Reading from the N-terminus, the 396-residue chain is Elongation factor Tu 1 (396 aa).

The tr-type G domain maps to 10-206; that stretch reads KLHVNVGTIG…ALDTFIPDPT (197 aa). Positions 19–26 are G1; that stretch reads GHVDHGKT. Position 19-26 (19-26) interacts with GTP; it reads GHVDHGKT. Residue Thr-26 participates in Mg(2+) binding. The tract at residues 60 to 64 is G2; that stretch reads GITIS. The segment at 81–84 is G3; it reads DCPG. Residues 81 to 85 and 136 to 139 contribute to the GTP site; these read DCPGH and NKAD. Residues 136–139 are G4; sequence NKAD. The interval 174 to 176 is G5; that stretch reads SAR.

This sequence belongs to the TRAFAC class translation factor GTPase superfamily. Classic translation factor GTPase family. EF-Tu/EF-1A subfamily. In terms of assembly, monomer.

The protein resides in the cytoplasm. The enzyme catalyses GTP + H2O = GDP + phosphate + H(+). In terms of biological role, GTP hydrolase that promotes the GTP-dependent binding of aminoacyl-tRNA to the A-site of ribosomes during protein biosynthesis. This chain is Elongation factor Tu 1, found in Xanthomonas campestris pv. campestris (strain B100).